We begin with the raw amino-acid sequence, 140 residues long: Phosphoribosyl-AMP cyclohydrolase (140 aa).

Aspartate 78 provides a ligand contact to Mg(2+). Residue cysteine 79 coordinates Zn(2+). Aspartate 80 and aspartate 82 together coordinate Mg(2+). 2 residues coordinate Zn(2+): cysteine 96 and cysteine 103.

This sequence belongs to the PRA-CH family. Homodimer. The cofactor is Mg(2+). It depends on Zn(2+) as a cofactor.

The protein localises to the cytoplasm. The enzyme catalyses 1-(5-phospho-beta-D-ribosyl)-5'-AMP + H2O = 1-(5-phospho-beta-D-ribosyl)-5-[(5-phospho-beta-D-ribosylamino)methylideneamino]imidazole-4-carboxamide. Its pathway is amino-acid biosynthesis; L-histidine biosynthesis; L-histidine from 5-phospho-alpha-D-ribose 1-diphosphate: step 3/9. Catalyzes the hydrolysis of the adenine ring of phosphoribosyl-AMP. The sequence is that of Phosphoribosyl-AMP cyclohydrolase from Ralstonia nicotianae (strain ATCC BAA-1114 / GMI1000) (Ralstonia solanacearum).